The primary structure comprises 449 residues: Elongation factor 1-alpha C (449 aa).

The 230-residue stretch at 5-234 (KQHVSIVVIG…DACDPPKRPV (230 aa)) folds into the tr-type G domain. The tract at residues 14 to 21 (GHVDSGKS) is G1. 14–21 (GHVDSGKS) is a GTP binding site. Position 55 is an N6,N6-dimethyllysine (Lys-55). The interval 70–74 (GITID) is G2. At Lys-79 the chain carries N6,N6,N6-trimethyllysine. The tract at residues 91 to 94 (DAPG) is G3. GTP-binding positions include 91–95 (DAPGH) and 153–156 (NKMD). The interval 153 to 156 (NKMD) is G4. Residue Lys-187 is modified to N6,N6,N6-trimethyllysine. Positions 194–196 (SGW) are G5. An N6-methyllysine modification is found at Lys-265. An N6,N6,N6-trimethyllysine mark is found at Lys-310 and Lys-400.

The protein belongs to the TRAFAC class translation factor GTPase superfamily. Classic translation factor GTPase family. EF-Tu/EF-1A subfamily.

It is found in the cytoplasm. Its function is as follows. This protein promotes the GTP-dependent binding of aminoacyl-tRNA to the A-site of ribosomes during protein biosynthesis. The polypeptide is Elongation factor 1-alpha C (TEF-C) (Porphyra purpurea (Red seaweed)).